A 64-amino-acid chain; its full sequence is Ferredoxin-2 (64 aa).

4Fe-4S ferredoxin-type domains are found at residues 3-31 and 34-64; these read KYLY…MSSA and YAEV…WREE. [4Fe-4S] cluster-binding residues include C12, C15, C18, and C54.

Homodimer. [4Fe-4S] cluster is required as a cofactor.

Its function is as follows. Ferredoxins are iron-sulfur proteins that transfer electrons in a wide variety of metabolic reactions. In Nitratidesulfovibrio vulgaris (strain DSM 19637 / Miyazaki F) (Desulfovibrio vulgaris), this protein is Ferredoxin-2.